A 385-amino-acid chain; its full sequence is UPF0744 protein YSD83 (385 aa).

This sequence belongs to the UPF0744 family.

In Saccharomyces paradoxus (Yeast), this protein is UPF0744 protein YSD83 (YSD83).